Here is a 66-residue protein sequence, read N- to C-terminus: Large ribosomal subunit protein uL29 (66 aa).

It belongs to the universal ribosomal protein uL29 family.

In Borreliella afzelii (strain PKo) (Borrelia afzelii), this protein is Large ribosomal subunit protein uL29.